The chain runs to 46 residues: Ligatoxin-B (46 aa).

3 disulfide bridges follow: C3-C40, C4-C32, and C16-C26.

This sequence belongs to the plant thionin (TC 1.C.44) family.

It localises to the secreted. Thionins are small plant proteins which are toxic to animal cells. They seem to exert their toxic effect at the level of the cell membrane. Their precise function is not known. The protein is Ligatoxin-B of Phoradendron liga (Argentine mistletoe).